Reading from the N-terminus, the 860-residue chain is Alanine--tRNA ligase (860 aa).

Zn(2+)-binding residues include H563, H567, C665, and H669. A disordered region spans residues 824-843; the sequence is VGGKGGGRPDMAQAGGTDSS.

Belongs to the class-II aminoacyl-tRNA synthetase family. Requires Zn(2+) as cofactor.

It localises to the cytoplasm. It catalyses the reaction tRNA(Ala) + L-alanine + ATP = L-alanyl-tRNA(Ala) + AMP + diphosphate. In terms of biological role, catalyzes the attachment of alanine to tRNA(Ala) in a two-step reaction: alanine is first activated by ATP to form Ala-AMP and then transferred to the acceptor end of tRNA(Ala). Also edits incorrectly charged Ser-tRNA(Ala) and Gly-tRNA(Ala) via its editing domain. This is Alanine--tRNA ligase from Vibrio vulnificus (strain YJ016).